The primary structure comprises 191 residues: uncharacterized protein (191 aa).

This is an uncharacterized protein from Bacillus subtilis (strain 168).